Consider the following 70-residue polypeptide: Protein FlmC homolog (70 aa).

The disordered stretch occupies residues 1 to 21; sequence MSSPHQDSLLPRFAQGEEGHE.

This chain is Protein FlmC homolog, found in Escherichia coli.